Reading from the N-terminus, the 245-residue chain is tRNA pseudouridine synthase A (245 aa).

D52 serves as the catalytic Nucleophile. Position 111 (Y111) interacts with substrate.

It belongs to the tRNA pseudouridine synthase TruA family. Homodimer.

The catalysed reaction is uridine(38/39/40) in tRNA = pseudouridine(38/39/40) in tRNA. Formation of pseudouridine at positions 38, 39 and 40 in the anticodon stem and loop of transfer RNAs. The sequence is that of tRNA pseudouridine synthase A from Rickettsia akari (strain Hartford).